Here is a 331-residue protein sequence, read N- to C-terminus: Autoinducer 2 import system permease protein LsrC (331 aa).

The next 9 membrane-spanning stretches (helical) occupy residues 14–34 (LIAILCLFGLLSVIDHQYFSL), 39–59 (LVFSSAQILILLAIGATLVML), 70–90 (IAGLCAVIMGMSLNAGFNLPV), 93–113 (LLTLLLGMCAGFINGALVTWL), 115–135 (IPAIVTTLGTLGLYRGLMLLL), 157–177 (LNISPIGWLLMILILAMAWIL), 206–226 (IQIIAFSVNGIMAALAGIVFA), 252–272 (GISLLGGTGTVIGAILGAFFL), and 284–304 (LPAWWNDFIAGFVLLAVLIFD).

The protein belongs to the binding-protein-dependent transport system permease family. AraH/RbsC subfamily. In terms of assembly, the complex is composed of two ATP-binding proteins (LsrA), two transmembrane proteins (LsrC and LsrD) and a solute-binding protein (LsrB).

The protein resides in the cell inner membrane. Its function is as follows. Part of the ABC transporter complex LsrABCD involved in autoinducer 2 (AI-2) import. Probably responsible for the translocation of the substrate across the membrane. The polypeptide is Autoinducer 2 import system permease protein LsrC (lsrC) (Photorhabdus luminescens (Xenorhabdus luminescens)).